We begin with the raw amino-acid sequence, 229 residues long: Glycerol-3-phosphate acyltransferase (229 aa).

The next 6 helical transmembrane spans lie at 2 to 22 (WSLT…GALW), 56 to 76 (LATV…ASVI), 93 to 113 (FVVL…YPIF), 129 to 149 (LFAL…AVLL), 151 to 171 (SRYV…IVAL), and 178 to 198 (ADLD…IVVA).

It belongs to the PlsY family. In terms of assembly, probably interacts with PlsX.

The protein localises to the cell inner membrane. It carries out the reaction an acyl phosphate + sn-glycerol 3-phosphate = a 1-acyl-sn-glycero-3-phosphate + phosphate. Its pathway is lipid metabolism; phospholipid metabolism. In terms of biological role, catalyzes the transfer of an acyl group from acyl-phosphate (acyl-PO(4)) to glycerol-3-phosphate (G3P) to form lysophosphatidic acid (LPA). This enzyme utilizes acyl-phosphate as fatty acyl donor, but not acyl-CoA or acyl-ACP. This Salinibacter ruber (strain DSM 13855 / M31) protein is Glycerol-3-phosphate acyltransferase.